The sequence spans 149 residues: 18 kDa antigen 1 (149 aa).

The sHSP domain occupies 21 to 131 (TAARPAVMPM…KPRKIAVGRG (111 aa)).

This sequence belongs to the small heat shock protein (HSP20) family.

Not known. This protein is one of the major immune reactive proteins in mycobacteria. This is 18 kDa antigen 1 from Mycobacterium intracellulare.